Reading from the N-terminus, the 256-residue chain is 1-(5-phosphoribosyl)-5-[(5-phosphoribosylamino)methylideneamino] imidazole-4-carboxamide isomerase (256 aa).

The Proton acceptor role is filled by aspartate 9. The active-site Proton donor is the aspartate 130.

It belongs to the HisA/HisF family.

The protein localises to the cytoplasm. The catalysed reaction is 1-(5-phospho-beta-D-ribosyl)-5-[(5-phospho-beta-D-ribosylamino)methylideneamino]imidazole-4-carboxamide = 5-[(5-phospho-1-deoxy-D-ribulos-1-ylimino)methylamino]-1-(5-phospho-beta-D-ribosyl)imidazole-4-carboxamide. The protein operates within amino-acid biosynthesis; L-histidine biosynthesis; L-histidine from 5-phospho-alpha-D-ribose 1-diphosphate: step 4/9. This Prochlorococcus marinus (strain SARG / CCMP1375 / SS120) protein is 1-(5-phosphoribosyl)-5-[(5-phosphoribosylamino)methylideneamino] imidazole-4-carboxamide isomerase.